Reading from the N-terminus, the 234-residue chain is Purine nucleoside phosphorylase DeoD-type (234 aa).

His-4 contacts a purine D-ribonucleoside. Residues Gly-20, Arg-24, Arg-43, and 87 to 90 contribute to the phosphate site; that span reads RVGT. A purine D-ribonucleoside is bound by residues 179–181 and 203–204; these read EME and SN.

It belongs to the PNP/UDP phosphorylase family. As to quaternary structure, homohexamer; trimer of homodimers.

It catalyses the reaction a purine D-ribonucleoside + phosphate = a purine nucleobase + alpha-D-ribose 1-phosphate. It carries out the reaction a purine 2'-deoxy-D-ribonucleoside + phosphate = a purine nucleobase + 2-deoxy-alpha-D-ribose 1-phosphate. Catalyzes the reversible phosphorolytic breakdown of the N-glycosidic bond in the beta-(deoxy)ribonucleoside molecules, with the formation of the corresponding free purine bases and pentose-1-phosphate. The chain is Purine nucleoside phosphorylase DeoD-type from Latilactobacillus sakei subsp. sakei (strain 23K) (Lactobacillus sakei subsp. sakei).